A 2562-amino-acid polypeptide reads, in one-letter code: Zinc finger homeobox protein 2 (2562 aa).

Residues 1–13 (MATLNSASPSGTV) are compositionally biased toward polar residues. 2 disordered regions span residues 1–88 (MATL…PPKD) and 337–410 (PSPP…DPPP). Basic and acidic residues predominate over residues 56–73 (GGERLESGSDLDPPKEIG). C2H2-type zinc fingers lie at residues 446-469 (LKCP…REKH) and 501-525 (YRCD…SDKH). Disordered regions lie at residues 530–559 (QGFQ…EPKT), 603–651 (PPGL…PDKP), and 669–705 (RKFP…PSPD). Residues 609 to 622 (PGPPPPPGAAPTNP) show a composition bias toward pro residues. Residues 690–704 (LLGSSSDGLPTSPSP) show a composition bias toward polar residues. C2H2-type zinc fingers lie at residues 752 to 776 (HRCK…TDKH), 815 to 839 (LRCN…GSAH), and 864 to 888 (YHCL…TPAH). Residues 923–966 (RLQTPGKASDTPLAQPPTSEKDAQNKTEQQASEVTEDRSGPPRD) form a disordered region. The C2H2-type 6 zinc finger occupies 1003–1026 (YRCPLCQEQLVGRPALHFHLSHLH). Disordered stretches follow at residues 1058–1126 (NPVE…PAPR) and 1140–1166 (MSEE…HPLT). Composition is skewed to pro residues over residues 1091-1101 (SPDPPLEPPLA) and 1114-1124 (DQPPSPAPSPA). 2 C2H2-type zinc fingers span residues 1185–1211 (YKCT…SHLH) and 1242–1266 (FKCT…SVLH). The span at 1278–1305 (RAEGAERGQEEFKEGETEGEAGTEKKGP) shows a compositional bias: basic and acidic residues. The interval 1278–1313 (RAEGAERGQEEFKEGETEGEAGTEKKGPDPGGFMSG) is disordered. Residues 1474-1497 (LACGACGKLFSNMLILKTHEEHVH) form a C2H2-type 9 zinc finger. A disordered region spans residues 1520 to 1584 (LYPPPVEPPK…EGSRGSLPPA (65 aa)). The span at 1521 to 1531 (YPPPVEPPKPP) shows a compositional bias: pro residues. Residues 1589-1648 (RRFSRTKFTEFQTQALQSFFETSAYPKDGEVERLASLLGLASRVVVVWFQNARQKARKNA) constitute a DNA-binding region (homeobox 1). The C2H2-type 10; degenerate zinc-finger motif lies at 1664–1687 (SGCRRCHATFACVFELVRHLKKCY). The disordered stretch occupies residues 1689–1760 (DQPPEEEEEA…EGKAPPSPPV (72 aa)). A compositionally biased stretch (acidic residues) spans 1690 to 1713 (QPPEEEEEAERGEEEEEVEEEEAE). Residues 1743 to 1752 (TRPESKESEG) show a composition bias toward basic and acidic residues. Residues 1761–1783 (YACDQCAASFPSQDLLTTHHRLH) form a C2H2-type 11 zinc finger. Disordered stretches follow at residues 1814 to 1853 (SGTS…KDKR), 1907 to 1934 (RKGQ…PAPF), 1971 to 2057 (PLPF…DSMG), 2114 to 2136 (KKAK…TSAA), 2186 to 2210 (PAPE…PLGA), 2263 to 2313 (QTAG…PNSS), and 2391 to 2429 (LQQP…LTGS). A DNA-binding region (homeobox 2) is located at residues 1851–1910 (DKRLRTTILPEQLEILYRWYMQDSNPTRKMLDCISEEVGLKKRVVQVWFQNTRARERKGQ). The segment covering 1985-1996 (TPEPPPPLPPPA) has biased composition (pro residues). Low complexity predominate over residues 2008–2037 (KASPESEACSPSAGDLSDSSASSLAEPESP). Positions 2038–2051 (GAGGTSGGPGGGTG) are enriched in gly residues. Residues 2058-2117 (QRRYRTQMSSLQLKIMKACYEAYRTPTMQECEVLGEEIGLPKRVIQVWFQNARAKEKKAK) constitute a DNA-binding region (homeobox 3). Residues 2188-2200 (PETPLAPKGPPAT) show a composition bias toward pro residues. Positions 2275-2286 (PVSNQTNSSTDP) are enriched in polar residues. Over residues 2295-2305 (SGDKVSGERKP) the composition is skewed to basic and acidic residues. Residues 2395-2411 (PQAPEPTATAPPKPPEL) show a composition bias toward pro residues. The C2H2-type 12; degenerate zinc finger occupies 2441–2461 (YLCRQCKMAFDGEAPATAHQR). The C2H2-type 13 zinc finger occupies 2485 to 2509 (YHCLACEVLLSGREALASHLRSSAH). Disordered stretches follow at residues 2506 to 2525 (SSAH…ITVT) and 2540 to 2562 (EEAR…LLAL). Over residues 2553-2562 (TTTTSTLLAL) the composition is skewed to low complexity.

As to expression, expressed in brain (at protein level). Expressed at the highest levels in the pyramidal cell layer of the hippocampus, the suprachiasmatic nucleus, laterodorsal thalamic nucleus, lateral geniculate nucleus, substantia nigra pars compacta, and magnocellular part of the red nucleus (at protein level). Highly expressed in dorsal root ganglia. Expressed at lower levels in kidney, stomach, liver, heart and testis.

It localises to the nucleus. Its function is as follows. Transcriptional regulator that is critical for the regulation of pain perception and processing of noxious stimuli. This is Zinc finger homeobox protein 2 from Mus musculus (Mouse).